Consider the following 242-residue polypeptide: Ribonuclease PH (242 aa).

Residues R89 and 127–129 contribute to the phosphate site; that span reads GTR.

Belongs to the RNase PH family. In terms of assembly, homohexameric ring arranged as a trimer of dimers.

It catalyses the reaction tRNA(n+1) + phosphate = tRNA(n) + a ribonucleoside 5'-diphosphate. Its function is as follows. Phosphorolytic 3'-5' exoribonuclease that plays an important role in tRNA 3'-end maturation. Removes nucleotide residues following the 3'-CCA terminus of tRNAs; can also add nucleotides to the ends of RNA molecules by using nucleoside diphosphates as substrates, but this may not be physiologically important. Probably plays a role in initiation of 16S rRNA degradation (leading to ribosome degradation) during starvation. The protein is Ribonuclease PH of Neisseria meningitidis serogroup B (strain ATCC BAA-335 / MC58).